Here is a 260-residue protein sequence, read N- to C-terminus: Na(+)-translocating NADH-quinone reductase subunit C (260 aa).

The helical transmembrane segment at 12–32 threads the bilayer; the sequence is LLVIILLSLACSIIVAGSAVL. Thr226 carries the post-translational modification FMN phosphoryl threonine.

The protein belongs to the NqrC family. In terms of assembly, composed of six subunits; NqrA, NqrB, NqrC, NqrD, NqrE and NqrF. The cofactor is FMN.

The protein localises to the cell inner membrane. It carries out the reaction a ubiquinone + n Na(+)(in) + NADH + H(+) = a ubiquinol + n Na(+)(out) + NAD(+). Its function is as follows. NQR complex catalyzes the reduction of ubiquinone-1 to ubiquinol by two successive reactions, coupled with the transport of Na(+) ions from the cytoplasm to the periplasm. NqrA to NqrE are probably involved in the second step, the conversion of ubisemiquinone to ubiquinol. The sequence is that of Na(+)-translocating NADH-quinone reductase subunit C from Pasteurella multocida (strain Pm70).